The chain runs to 187 residues: Late expression factor 11 (187 aa).

Disordered regions lie at residues 1–24 and 119–187; these read MAPA…RNRD and GDTK…QSQQ.

It belongs to the baculoviridae LEF-11 family.

Its function is as follows. Involved in late/very late gene activation. In Lymantria dispar multicapsid nuclear polyhedrosis virus (LdMNPV), this protein is Late expression factor 11 (LEF-11).